Here is a 365-residue protein sequence, read N- to C-terminus: Neutral protease 2 homolog mep20 (365 aa).

An N-terminal signal peptide occupies residues 1 to 19 (MKVTILASAILALINGALA). Positions 20–172 (LPANTPTLDV…PQAIKLLDRR (153 aa)) are excised as a propeptide. The N-linked (GlcNAc...) asparagine glycan is linked to Asn73. Disulfide bonds link Cys178/Cys249 and Cys256/Cys274. His299 is a Zn(2+) binding site. Glu300 is a catalytic residue. Positions 303 and 314 each coordinate Zn(2+). Asn351 carries N-linked (GlcNAc...) asparagine glycosylation.

The protein belongs to the peptidase M35 family. Requires Zn(2+) as cofactor.

The protein localises to the secreted. The catalysed reaction is Preferential cleavage of bonds with hydrophobic residues in P1'. Also 3-Asn-|-Gln-4 and 8-Gly-|-Ser-9 bonds in insulin B chain.. In terms of biological role, secreted metalloproteinase that allows assimilation of proteinaceous substrates. Shows high activities on basic nuclear substrates such as histone and protamine. May be involved in virulence. The chain is Neutral protease 2 homolog mep20 (mep20) from Aspergillus fumigatus (Neosartorya fumigata).